Consider the following 226-residue polypeptide: Thiopurine S-methyltransferase (226 aa).

Residues tryptophan 16, methionine 51, glutamate 72, and arginine 131 each contribute to the S-adenosyl-L-methionine site.

Belongs to the class I-like SAM-binding methyltransferase superfamily. TPMT family.

Its subcellular location is the cytoplasm. The catalysed reaction is S-adenosyl-L-methionine + a thiopurine = S-adenosyl-L-homocysteine + a thiopurine S-methylether.. The polypeptide is Thiopurine S-methyltransferase (Francisella tularensis subsp. novicida (strain U112)).